A 323-amino-acid polypeptide reads, in one-letter code: Arginase-1 (323 aa).

The disordered stretch occupies residues 1–27 (MSSKPKPIEIIGAPFSKGQPRGGVEKG). An N6-succinyllysine modification is found at lysine 17. Residues serine 62 and serine 72 each carry the phosphoserine modification. Residue lysine 75 is modified to N6-succinyllysine. Histidine 101, aspartate 124, histidine 126, and aspartate 128 together coordinate Mn(2+). Substrate-binding positions include 126-130 (HTDIN) and 137-139 (SGN). Residue serine 163 is modified to Phosphoserine. Aspartate 183 provides a ligand contact to substrate. Serine 217 is modified (phosphoserine). Mn(2+) is bound by residues aspartate 232 and aspartate 234. Residues threonine 246 and glutamate 277 each contribute to the substrate site. Threonine 281 carries the phosphothreonine modification.

Belongs to the arginase family. Homotrimer. Interacts with CMTM6. Requires Mn(2+) as cofactor. As to expression, detected in liver (at protein level).

The protein resides in the cytoplasm. It localises to the cytoplasmic granule. It carries out the reaction L-arginine + H2O = urea + L-ornithine. Its pathway is nitrogen metabolism; urea cycle; L-ornithine and urea from L-arginine: step 1/1. With respect to regulation, inactivated by diethyl pyrocarbonate (DEPC). Its function is as follows. Key element of the urea cycle converting L-arginine to urea and L-ornithine, which is further metabolized into metabolites proline and polyamides that drive collagen synthesis and bioenergetic pathways critical for cell proliferation, respectively; the urea cycle takes place primarily in the liver and, to a lesser extent, in the kidneys. Functions in L-arginine homeostasis in nonhepatic tissues characterized by the competition between nitric oxide synthase (NOS) and arginase for the available intracellular substrate arginine. Arginine metabolism is a critical regulator of innate and adaptive immune responses. Involved in an antimicrobial effector pathway in polymorphonuclear granulocytes (PMN). Upon PMN cell death is liberated from the phagolysosome and depletes arginine in the microenvironment leading to suppressed T cell and natural killer (NK) cell proliferation and cytokine secretion. In group 2 innate lymphoid cells (ILC2s) promotes acute type 2 inflammation in the lung and is involved in optimal ILC2 proliferation but not survival. Plays a role in the immune response of alternatively activated or M2 macrophages in processes such as wound healing and tissue regeneration, immune defense against multicellular pathogens and parasites, and immune suppression and allergic inflammation; the regulatory outcome seems to be organ specific. In tumor-infiltrating dendritic cells (DCs) and myeloid-derived suppressor cells (MDSCs) plays a role in suppression of T cell-mediated antitumor immunity. This chain is Arginase-1 (Arg1), found in Rattus norvegicus (Rat).